An 852-amino-acid polypeptide reads, in one-letter code: GPI ethanolamine phosphate transferase 2 (852 aa).

Asn-191 and Asn-420 each carry an N-linked (GlcNAc...) asparagine glycan. 3 consecutive transmembrane segments (helical) span residues 458–478 (LIRL…TFFP), 486–506 (FAPA…MMFA), and 516–536 (FWYW…AGHF). Asn-576 is a glycosylation site (N-linked (GlcNAc...) asparagine). Transmembrane regions (helical) follow at residues 632–652 (LLYH…YSLY), 676–696 (TLTL…FLVF), 714–734 (TITS…SNAI), 750–770 (SVFI…IWWV), 787–807 (AHVT…MAAC), and 824–844 (YLYT…LGEI).

It belongs to the PIGG/PIGN/PIGO family. PIGG subfamily.

The protein resides in the endoplasmic reticulum membrane. The protein operates within glycolipid biosynthesis; glycosylphosphatidylinositol-anchor biosynthesis. Its function is as follows. Ethanolamine phosphate transferase involved in glycosylphosphatidylinositol-anchor biosynthesis. Transfers ethanolamine phosphate to the GPI second mannose. This Aspergillus oryzae (strain ATCC 42149 / RIB 40) (Yellow koji mold) protein is GPI ethanolamine phosphate transferase 2 (las21).